The primary structure comprises 172 residues: NADH-quinone oxidoreductase subunit B 1 (172 aa).

[4Fe-4S] cluster contacts are provided by cysteine 42, cysteine 43, cysteine 107, and cysteine 137.

This sequence belongs to the complex I 20 kDa subunit family. In terms of assembly, NDH-1 is composed of 14 different subunits. Subunits NuoB, C, D, E, F, and G constitute the peripheral sector of the complex. [4Fe-4S] cluster is required as a cofactor.

The protein resides in the cell inner membrane. It catalyses the reaction a quinone + NADH + 5 H(+)(in) = a quinol + NAD(+) + 4 H(+)(out). Functionally, NDH-1 shuttles electrons from NADH, via FMN and iron-sulfur (Fe-S) centers, to quinones in the respiratory chain. Couples the redox reaction to proton translocation (for every two electrons transferred, four hydrogen ions are translocated across the cytoplasmic membrane), and thus conserves the redox energy in a proton gradient. This Anaeromyxobacter sp. (strain Fw109-5) protein is NADH-quinone oxidoreductase subunit B 1.